The primary structure comprises 279 residues: GTP cyclohydrolase MptA (279 aa).

The protein belongs to the GTP cyclohydrolase IV family. In terms of assembly, homodimer. It depends on Fe(2+) as a cofactor.

It catalyses the reaction GTP + H2O = 7,8-dihydroneopterin 2',3'-cyclic phosphate + formate + diphosphate + H(+). It participates in cofactor biosynthesis; 5,6,7,8-tetrahydromethanopterin biosynthesis. Functionally, converts GTP to 7,8-dihydro-D-neopterin 2',3'-cyclic phosphate, the first intermediate in the biosynthesis of coenzyme methanopterin. The chain is GTP cyclohydrolase MptA from Korarchaeum cryptofilum (strain OPF8).